Here is a 295-residue protein sequence, read N- to C-terminus: ATP synthase gamma chain (295 aa).

This sequence belongs to the ATPase gamma chain family. In terms of assembly, F-type ATPases have 2 components, CF(1) - the catalytic core - and CF(0) - the membrane proton channel. CF(1) has five subunits: alpha(3), beta(3), gamma(1), delta(1), epsilon(1). CF(0) has three main subunits: a, b and c.

The protein localises to the cell inner membrane. Functionally, produces ATP from ADP in the presence of a proton gradient across the membrane. The gamma chain is believed to be important in regulating ATPase activity and the flow of protons through the CF(0) complex. This is ATP synthase gamma chain from Methylorubrum populi (strain ATCC BAA-705 / NCIMB 13946 / BJ001) (Methylobacterium populi).